Reading from the N-terminus, the 407-residue chain is Argininosuccinate synthase (407 aa).

ATP is bound at residue 8–16 (AYSGGLDTT). Positions 86 and 91 each coordinate L-citrulline. Position 116 (G116) interacts with ATP. Positions 118, 122, and 123 each coordinate L-aspartate. Residue N122 participates in L-citrulline binding. 5 residues coordinate L-citrulline: R126, S178, S187, E264, and Y276.

It belongs to the argininosuccinate synthase family. Type 1 subfamily. In terms of assembly, homotetramer.

The protein resides in the cytoplasm. The catalysed reaction is L-citrulline + L-aspartate + ATP = 2-(N(omega)-L-arginino)succinate + AMP + diphosphate + H(+). It functions in the pathway amino-acid biosynthesis; L-arginine biosynthesis; L-arginine from L-ornithine and carbamoyl phosphate: step 2/3. In Lachnoclostridium phytofermentans (strain ATCC 700394 / DSM 18823 / ISDg) (Clostridium phytofermentans), this protein is Argininosuccinate synthase.